Consider the following 106-residue polypeptide: Large ribosomal subunit protein uL24 (106 aa).

This sequence belongs to the universal ribosomal protein uL24 family. As to quaternary structure, part of the 50S ribosomal subunit.

Functionally, one of two assembly initiator proteins, it binds directly to the 5'-end of the 23S rRNA, where it nucleates assembly of the 50S subunit. One of the proteins that surrounds the polypeptide exit tunnel on the outside of the subunit. This chain is Large ribosomal subunit protein uL24, found in Azobacteroides pseudotrichonymphae genomovar. CFP2.